Here is a 429-residue protein sequence, read N- to C-terminus: Phenylalanine--tRNA ligase, chloroplastic/mitochondrial (429 aa).

Residues 1 to 53 constitute a chloroplast and mitochondrion transit peptide; the sequence is MTVFSVQSTIFSRASVALLSSNGFKRFSFVSSFSSSAAYSPPKMRKRRYPIVS. The residue at position 54 (Ala54) is an N-acetylalanine. Residues 163–166, Arg185, 192–194, 199–201, Glu269, and Phe294 contribute to the substrate site; these read SAHQ, THY, and QME. Residues 338–429 enclose the FDX-ACB domain; sequence SKYPPCYKDI…VQKKLNVELR (92 aa).

This sequence belongs to the class-II aminoacyl-tRNA synthetase family. As to quaternary structure, monomer.

It is found in the plastid. The protein resides in the chloroplast stroma. The protein localises to the mitochondrion matrix. The catalysed reaction is tRNA(Phe) + L-phenylalanine + ATP = L-phenylalanyl-tRNA(Phe) + AMP + diphosphate + H(+). Functionally, is responsible for the charging of tRNA(Phe) with phenylalanine in mitochondrial translation. The polypeptide is Phenylalanine--tRNA ligase, chloroplastic/mitochondrial (Arabidopsis thaliana (Mouse-ear cress)).